A 39-amino-acid polypeptide reads, in one-letter code: Cytochrome b559 subunit beta (39 aa).

A helical membrane pass occupies residues 14 to 30 (WLAVHGLAVPTVSFLGS). Heme is bound at residue histidine 18.

This sequence belongs to the PsbE/PsbF family. As to quaternary structure, heterodimer of an alpha subunit and a beta subunit. PSII is composed of 1 copy each of membrane proteins PsbA, PsbB, PsbC, PsbD, PsbE, PsbF, PsbH, PsbI, PsbJ, PsbK, PsbL, PsbM, PsbT, PsbX, PsbY, PsbZ, Psb30/Ycf12, at least 3 peripheral proteins of the oxygen-evolving complex and a large number of cofactors. It forms dimeric complexes. It depends on heme b as a cofactor.

It localises to the plastid. The protein resides in the chloroplast thylakoid membrane. Functionally, this b-type cytochrome is tightly associated with the reaction center of photosystem II (PSII). PSII is a light-driven water:plastoquinone oxidoreductase that uses light energy to abstract electrons from H(2)O, generating O(2) and a proton gradient subsequently used for ATP formation. It consists of a core antenna complex that captures photons, and an electron transfer chain that converts photonic excitation into a charge separation. This is Cytochrome b559 subunit beta from Lotus japonicus (Lotus corniculatus var. japonicus).